The chain runs to 201 residues: Probable GTP-binding protein EngB (201 aa).

The EngB-type G domain maps to 21–191 (PEAQIALAGR…WQELARAAGV (171 aa)). GTP-binding positions include 29–36 (GRSNVGKS), 56–60 (GKTRS), 75–78 (DLPG), 142–145 (TKAD), and 168–172 (VLTSS). 2 residues coordinate Mg(2+): S36 and T58.

The protein belongs to the TRAFAC class TrmE-Era-EngA-EngB-Septin-like GTPase superfamily. EngB GTPase family. The cofactor is Mg(2+).

In terms of biological role, necessary for normal cell division and for the maintenance of normal septation. The polypeptide is Probable GTP-binding protein EngB (Desulfovibrio desulfuricans (strain ATCC 27774 / DSM 6949 / MB)).